The sequence spans 533 residues: 1-aminocyclopropane-1-carboxylate synthase 5 (533 aa).

At Lys-358 the chain carries N6-(pyridoxal phosphate)lysine.

It belongs to the class-I pyridoxal-phosphate-dependent aminotransferase family. Pyridoxal 5'-phosphate serves as cofactor. As to expression, expressed in shoots and leaf blades. Expressed at low levels in leaf sheaths. Expressed in vasculature of roots and shoots.

It carries out the reaction S-adenosyl-L-methionine = 1-aminocyclopropane-1-carboxylate + S-methyl-5'-thioadenosine + H(+). It functions in the pathway alkene biosynthesis; ethylene biosynthesis via S-adenosyl-L-methionine; ethylene from S-adenosyl-L-methionine: step 1/2. Catalyzes the formation of 1-aminocyclopropane-1-carboxylate, a direct precursor of ethylene in higher plants. In Oryza sativa subsp. japonica (Rice), this protein is 1-aminocyclopropane-1-carboxylate synthase 5.